A 520-amino-acid polypeptide reads, in one-letter code: GMP synthase [glutamine-hydrolyzing] (520 aa).

The Glutamine amidotransferase type-1 domain occupies 9–202; sequence TILIIDFGSQ…VHRIVGVKPG (194 aa). The active-site Nucleophile is the Cys86. Active-site residues include His176 and Glu178. In terms of domain architecture, GMPS ATP-PPase spans 203–395; the sequence is WTMGAYREQA…LGLPDSFIGR (193 aa). An ATP-binding site is contributed by 230 to 236; that stretch reads SGGVDSS.

Homodimer.

The catalysed reaction is XMP + L-glutamine + ATP + H2O = GMP + L-glutamate + AMP + diphosphate + 2 H(+). Its pathway is purine metabolism; GMP biosynthesis; GMP from XMP (L-Gln route): step 1/1. Functionally, catalyzes the synthesis of GMP from XMP. The protein is GMP synthase [glutamine-hydrolyzing] of Brucella abortus (strain S19).